The primary structure comprises 439 residues: Tol-Pal system protein TolB (439 aa).

The first 22 residues, 1-22, serve as a signal peptide directing secretion; the sequence is MTKFPRWLAMLVGLLFPLSALT.

Belongs to the TolB family. As to quaternary structure, the Tol-Pal system is composed of five core proteins: the inner membrane proteins TolA, TolQ and TolR, the periplasmic protein TolB and the outer membrane protein Pal. They form a network linking the inner and outer membranes and the peptidoglycan layer.

It is found in the periplasm. Its function is as follows. Part of the Tol-Pal system, which plays a role in outer membrane invagination during cell division and is important for maintaining outer membrane integrity. In Xylella fastidiosa (strain Temecula1 / ATCC 700964), this protein is Tol-Pal system protein TolB.